The primary structure comprises 234 residues: 2,3,4,5-tetrahydropyridine-2,6-dicarboxylate N-acetyltransferase (234 aa).

It belongs to the transferase hexapeptide repeat family. DapH subfamily.

It catalyses the reaction (S)-2,3,4,5-tetrahydrodipicolinate + acetyl-CoA + H2O = L-2-acetamido-6-oxoheptanedioate + CoA. Its pathway is amino-acid biosynthesis; L-lysine biosynthesis via DAP pathway; LL-2,6-diaminopimelate from (S)-tetrahydrodipicolinate (acetylase route): step 1/3. Catalyzes the transfer of an acetyl group from acetyl-CoA to tetrahydrodipicolinate. The sequence is that of 2,3,4,5-tetrahydropyridine-2,6-dicarboxylate N-acetyltransferase from Lacticaseibacillus casei (strain BL23) (Lactobacillus casei).